We begin with the raw amino-acid sequence, 419 residues long: Glutamyl-tRNA reductase (419 aa).

Residues 50–53 (TCNR), Ser-108, 113–115 (ETQ), and Gln-119 contribute to the substrate site. The active-site Nucleophile is Cys-51. 188–193 (GAGEMI) contributes to the NADP(+) binding site.

This sequence belongs to the glutamyl-tRNA reductase family. Homodimer.

The enzyme catalyses (S)-4-amino-5-oxopentanoate + tRNA(Glu) + NADP(+) = L-glutamyl-tRNA(Glu) + NADPH + H(+). The protein operates within porphyrin-containing compound metabolism; protoporphyrin-IX biosynthesis; 5-aminolevulinate from L-glutamyl-tRNA(Glu): step 1/2. Its function is as follows. Catalyzes the NADPH-dependent reduction of glutamyl-tRNA(Glu) to glutamate 1-semialdehyde (GSA). In Albidiferax ferrireducens (strain ATCC BAA-621 / DSM 15236 / T118) (Rhodoferax ferrireducens), this protein is Glutamyl-tRNA reductase.